The primary structure comprises 426 residues: Target of rapamycin complex 2 subunit AVO2 (426 aa).

ANK repeat units follow at residues 4–33 (EPSV…DLLT), 39–68 (NGWS…DKHE), 74–104 (KGNT…FINH), 108–137 (NGRA…DLWV), and 141–171 (NGDT…SLDD). The tract at residues 259–302 (STHTTSGNGGNRRSSITNPVFNPRKPTLSTDSFSSSSNSSSRLR) is disordered. The span at 260-278 (THTTSGNGGNRRSSITNPV) shows a compositional bias: polar residues. Over residues 285–302 (TLSTDSFSSSSNSSSRLR) the composition is skewed to low complexity. A phosphoserine mark is found at serine 315 and serine 350. A compositionally biased stretch (polar residues) spans 350-359 (SNDNVRGDSQ). Residues 350–392 (SNDNVRGDSQTATINDDGGGGNGGDATIGMGLRKDPDDENENK) are disordered. Residues 366-375 (DGGGGNGGDA) show a composition bias toward gly residues. A compositionally biased stretch (basic and acidic residues) spans 381 to 392 (LRKDPDDENENK).

In terms of assembly, the target of rapamycin complex 2 (TORC2) is composed of at least AVO1, AVO2, BIT61, LST8, TOR2 and TSC11. TORC2 forms a homodimer. Contrary to TORC1, TORC2 does not bind to and is not sensitive to FKBP-rapamycin. AVO2 is peripherally associated to AVO1 and TSC11.

Its subcellular location is the cell membrane. The protein resides in the vacuole membrane. Component of TORC2, which regulates cell cycle-dependent polarization of the actin-cytoskeleton and cell wall integrity. TORC2 controls polarity of the actin cytoskeleton, which is required for orienting the secretory pathway toward discrete growth sites, via the RHO1/PKC1/MAPK cell integrity pathway. The protein is Target of rapamycin complex 2 subunit AVO2 (AVO2) of Saccharomyces cerevisiae (strain ATCC 204508 / S288c) (Baker's yeast).